The primary structure comprises 114 residues: Astacin-like metalloprotease toxin 4 (114 aa).

One can recognise a Peptidase M12A domain in the interval 1–114 (RETNENDYVD…GLLCLFKGSV (114 aa)). An intrachain disulfide couples cysteine 17 to cysteine 38. Residue histidine 46 participates in Zn(2+) binding. Glutamate 47 is an active-site residue. Zn(2+) contacts are provided by histidine 50 and histidine 56. Asparagine 88 carries N-linked (GlcNAc...) asparagine glycosylation.

Monomer. Zn(2+) is required as a cofactor. Expressed by the venom gland.

Its subcellular location is the secreted. With respect to regulation, inhibited by 1,10-phenanthroline. Its function is as follows. Zinc metalloprotease. Provoques deadhesion of endothelial cells from cell cultures, and also degradation of fibronectin, fibrinogen and gelatin in vitro. Its role in the venom is not fully understood but it might act as a spreading factor that facilitates diffusion of other venom toxins. Alternatively, it might be involved in the proteolytic processing of other venom toxins or it might play a role in extra-oral digestion of prey. The polypeptide is Astacin-like metalloprotease toxin 4 (Loxosceles laeta (South American recluse spider)).